The primary structure comprises 147 residues: Hemoglobin subunit beta (147 aa).

Positions 2–147 (ELTEAQRGAI…VVSALGKQYH (146 aa)) constitute a Globin domain. 2 residues coordinate heme b: His-63 and His-92.

This sequence belongs to the globin family. As to quaternary structure, heterotetramer of two alpha chains and two beta chains. Red blood cells.

In terms of biological role, involved in oxygen transport from gills to the various peripheral tissues. The protein is Hemoglobin subunit beta (hbb) of Electrophorus electricus (Electric eel).